We begin with the raw amino-acid sequence, 199 residues long: Chorismate pyruvate-lyase (199 aa).

It belongs to the chorismate pyruvate-lyase type 2 family.

It carries out the reaction chorismate = 4-hydroxybenzoate + pyruvate. Removes the pyruvyl group from chorismate to provide 4-hydroxybenzoate (4HB). Involved in the synthesis of glycosylated p-hydroxybenzoic acid methyl esters (p-HBADs) and phenolic glycolipids (PGL) that play important roles in the pathogenesis of mycobacterial infections. In Mycobacterium bovis (strain ATCC BAA-935 / AF2122/97), this protein is Chorismate pyruvate-lyase.